Reading from the N-terminus, the 548-residue chain is MNIAMTERYKWLLFFLFILLTYFIPLETRLLWQPDEIRYAEISREMLVSGNWSVPYLLDIRYFEKPVLGYWINCIAQWLFGESHFAVRIVVVTSTLLTGWLIYKAAMVVWRNSALAFNAMTVFLSSFLVLAIGTYNILDPIVTLFVTAAMYSFLVALSTPNKKGKIIAYMGIGFFCALGFLTKGFIAVVLPALVFLVMAISQARFKEVVCYSSIALLALAITAGPWVITVALQAPDYWNYFFWVEHVQRFIAKESARSQPTWFYIPIVILGVLPWLGFLFGALKSAFSLKKGTLYFLLWFTLFFAFFSASKGKLLTYMLPCFVPLSILIAHYIEELKDRPDEKISKVNASINIAFGLMGISAVIYSLYSAKFALYDTNETLKIVLAISGFLFWSVIGAGALFRQTQFLTMFCSIGLSLVIGYAIPEKIESRSTPENIIQRYYEPLSNKSYLLTDEVGIGTSLAWGLKRTDIRLTETKGELAYGLNYPDVKNKYYSLEQLLALIEANQYKGVAIVLVRPDRKQILTKLTTLKEKPIVEKEGDLTLVFFN.

12 helical membrane-spanning segments follow: residues 11–31, 89–109, 114–134, 137–157, 180–200, 214–234, 263–283, 292–312, 314–334, 347–367, 382–402, and 405–425; these read WLLF…TRLL, IVVV…AMVV, ALAF…AIGT, ILDP…LVAL, FLTK…VMAI, IALL…ALQA, FYIP…FGAL, GTLY…ASKG, LLTY…HYIE, VNAS…IYSL, KIVL…GALF, and TQFL…YAIP.

Belongs to the glycosyltransferase 83 family.

It is found in the cell inner membrane. It catalyses the reaction 4-amino-4-deoxy-alpha-L-arabinopyranosyl di-trans,octa-cis-undecaprenyl phosphate + lipid IVA = lipid IIA + di-trans,octa-cis-undecaprenyl phosphate.. It functions in the pathway lipopolysaccharide metabolism; 4-amino-4-deoxy-beta-L-arabinose-lipid A biosynthesis. In terms of biological role, catalyzes the transfer of the L-Ara4N moiety of the glycolipid undecaprenyl phosphate-alpha-L-Ara4N to lipid A. The modified arabinose is attached to lipid A and is required for resistance to polymyxin and cationic antimicrobial peptides. The sequence is that of Undecaprenyl phosphate-alpha-4-amino-4-deoxy-L-arabinose arabinosyl transferase 1 from Proteus mirabilis (strain HI4320).